Here is a 304-residue protein sequence, read N- to C-terminus: Protein PagO (304 aa).

The next 10 helical transmembrane spans lie at 4–24 (VSISILFMLVSLTWGTTWLAM), 34–54 (VFATGMRFMFAAPFLIIIAWL), 67–87 (LFQFVICIFYFCIPFSLMIYG), 95–115 (LAAIIFANMPVAVLIASVLFL), 119–139 (AKLMQIAGLTIAITALTGILL), 150–170 (WQGITALISAVLIHAIIYTQC), 180–200 (ITFNALPCLLAGLILSATGWF), 214–234 (ILATLYLGAFAGVFGILCYFA), 246–266 (LVFLIFPLIAVSLEDYIYGYA), and 267–287 (ISTHSMLLIIPLVIGIFLTLV). EamA domains lie at 15 to 139 (LTWG…GILL) and 161 to 287 (LIHA…LTLV).

This sequence belongs to the EamA transporter family.

The protein localises to the cell membrane. The chain is Protein PagO (pagO) from Salmonella typhimurium (strain LT2 / SGSC1412 / ATCC 700720).